The primary structure comprises 313 residues: MKGFNCNGQVILISGGSQGLGESFAKRFVQDDDGPGSNTNKVIIVSRSQSKLVKACERIGVDGVSLDRYVNDTNRNETKLIYHSCDTSSYDKVALMFKLLVKSELVPSQVYMCAGGSIPKLFLDLTPEELQNGITTNYSTAVNLAHVSLKHDVPHLLFFSSEVAFFPFIGYAQYAPLKQSIRSLVAILRQEHSSTRITCVYPGNFQSEGFDLENITKPAITKEIEGPSNPVTAAQCRDKIISSLKWGLDDITTDSIGWLLMACDQGLNKHSTSQFMFVFSWILGALLNITIVPIYMLICKFQIYQWKRNKDTK.

Leu-12 is an NADP(+) binding site. NADPH contacts are provided by Gly-15, Ser-17, and Gly-19. Residues 15-19 carry the GXSXG motif; that stretch reads GGSQG. Leu-20 provides a ligand contact to NADP(+). Arg-47, Lys-51, and Asp-86 together coordinate NADPH. Asp-86 contributes to the NADP(+) binding site. The active-site Proton donor is Ser-160. NADP(+) is bound by residues Tyr-174, Lys-178, and Ser-207. Tyr-174 acts as the Proton acceptor in catalysis. Lys-178 serves as the catalytic Lowers pKa of active site Tyr. Residues 278 to 298 traverse the membrane as a helical segment; that stretch reads VFSWILGALLNITIVPIYMLI.

The protein belongs to the short-chain dehydrogenases/reductases (SDR) family.

Its subcellular location is the endoplasmic reticulum membrane. The catalysed reaction is sphinganine + NADP(+) = 3-oxosphinganine + NADPH + H(+). The protein operates within lipid metabolism; sphingolipid metabolism. Its function is as follows. Catalyzes the reduction of 3'-oxosphinganine (3-ketodihydrosphingosine/KDS) to sphinganine (dihydrosphingosine/DHS), the second step of de novo sphingolipid biosynthesis. This chain is 3-ketodihydrosphingosine reductase TSC10 (TSC10), found in Kluyveromyces lactis (strain ATCC 8585 / CBS 2359 / DSM 70799 / NBRC 1267 / NRRL Y-1140 / WM37) (Yeast).